Consider the following 396-residue polypeptide: Succinyl-diaminopimelate desuccinylase (396 aa).

A Zn(2+)-binding site is contributed by H74. D76 is an active-site residue. D107 is a Zn(2+) binding site. E142 serves as the catalytic Proton acceptor. The Zn(2+) site is built by E143, E171, and H360.

This sequence belongs to the peptidase M20A family. DapE subfamily. Homodimer. Zn(2+) is required as a cofactor. The cofactor is Co(2+).

The enzyme catalyses N-succinyl-(2S,6S)-2,6-diaminopimelate + H2O = (2S,6S)-2,6-diaminopimelate + succinate. It functions in the pathway amino-acid biosynthesis; L-lysine biosynthesis via DAP pathway; LL-2,6-diaminopimelate from (S)-tetrahydrodipicolinate (succinylase route): step 3/3. Functionally, catalyzes the hydrolysis of N-succinyl-L,L-diaminopimelic acid (SDAP), forming succinate and LL-2,6-diaminopimelate (DAP), an intermediate involved in the bacterial biosynthesis of lysine and meso-diaminopimelic acid, an essential component of bacterial cell walls. This chain is Succinyl-diaminopimelate desuccinylase, found in Methylobacterium sp. (strain 4-46).